We begin with the raw amino-acid sequence, 1962 residues long: Myosin heavy chain, muscle (1962 aa).

One can recognise a Myosin N-terminal SH3-like domain in the interval 33–82 (DSKKSCWIPDEKEGYLLGEIKATKGDIVSVGLQGGEVRDIKSEKVEKVNP). The Myosin motor domain maps to 86–777 (EKIEDMADMT…VLGQMEEFRD (692 aa)). Residue 179–186 (GESGAGKT) coordinates ATP. The segment at 656–678 (LNSLMTTLRSTQPHFVRCIIPNE) is actin-binding. An IQ domain is found at 780 to 809 (LGKIMSWMQAWARGYLSRKGFKKLQEQRVA). Residues 802–1927 (KLQEQRVALK…KFRAKGRAGS (1126 aa)) adopt a coiled-coil conformation. 2 disordered regions span residues 1822 to 1862 (ENEL…NHER) and 1922 to 1962 (KGRA…ENEF).

Belongs to the TRAFAC class myosin-kinesin ATPase superfamily. Myosin family. Muscle myosin is a hexameric protein that consists of 2 heavy chain subunits (MHC), 2 alkali light chain subunits (MLC) and 2 regulatory light chain subunits (MLC-2). Expressed in larval and adult muscles. Isoforms containing exon 9a are expressed in indirect flight muscles, exons 9a and 9b are expressed in jump muscles, exons 9b and 9c are expressed in other larval and adult muscles.

It is found in the cytoplasm. It localises to the myofibril. Its function is as follows. Muscle contraction. The polypeptide is Myosin heavy chain, muscle (Mhc) (Drosophila melanogaster (Fruit fly)).